We begin with the raw amino-acid sequence, 755 residues long: Exocyst complex component 3 (755 aa).

At K38 the chain carries N6-acetyllysine.

The protein belongs to the SEC6 family. The exocyst complex is composed of EXOC1, EXOC2, EXOC3, EXOC4, EXOC5, EXOC6, EXOC7 and EXOC8. Interacts with EXOC3L1. Interacts with BIRC6/bruce. Interacts with MYRIP. Interacts with SLC6A9.

The protein resides in the cytoplasm. The protein localises to the perinuclear region. It localises to the cell projection. It is found in the growth cone. Its subcellular location is the midbody. The protein resides in the golgi apparatus. The protein localises to the neuron projection. Its function is as follows. Component of the exocyst complex involved in the docking of exocytic vesicles with fusion sites on the plasma membrane. This is Exocyst complex component 3 (Exoc3) from Mus musculus (Mouse).